Consider the following 607-residue polypeptide: Discoidin-inducing complex subunit B (607 aa).

A signal peptide spans 1 to 19 (MNKKIIILIYLIFIKSIVG). Over 20–554 (QNPVWIGGSG…LGTDGISKGS (535 aa)) the chain is Extracellular. Residues Asn75, Asn161, Asn215, Asn276, Asn277, Asn307, Asn324, Asn453, Asn477, and Asn527 are each glycosylated (N-linked (GlcNAc...) asparagine). The helical transmembrane segment at 555-575 (LAGISVSMVALACFVSLGVWW) threads the bilayer. The Cytoplasmic portion of the chain corresponds to 576–607 (KTSKKNDQRNDSQVLTNFSQNKSDDIDVERKL).

In terms of assembly, forms a complex with psiF/dicA.

It is found in the membrane. It localises to the secreted. Its function is as follows. Component of a complex that acts as a quorum sensing protein regulating discoidin gene expression during growth and development. Its function in the complex is unclear as it has no ability to induce discoidin during growth and development by itself. This chain is Discoidin-inducing complex subunit B (dicB), found in Dictyostelium discoideum (Social amoeba).